Reading from the N-terminus, the 72-residue chain is Translation initiation factor IF-1 (72 aa).

The 72-residue stretch at 1–72 (MAKEGAIEVE…TRGRIVYRYK (72 aa)) folds into the S1-like domain.

This sequence belongs to the IF-1 family. As to quaternary structure, component of the 30S ribosomal translation pre-initiation complex which assembles on the 30S ribosome in the order IF-2 and IF-3, IF-1 and N-formylmethionyl-tRNA(fMet); mRNA recruitment can occur at any time during PIC assembly.

It is found in the cytoplasm. Its function is as follows. One of the essential components for the initiation of protein synthesis. Stabilizes the binding of IF-2 and IF-3 on the 30S subunit to which N-formylmethionyl-tRNA(fMet) subsequently binds. Helps modulate mRNA selection, yielding the 30S pre-initiation complex (PIC). Upon addition of the 50S ribosomal subunit IF-1, IF-2 and IF-3 are released leaving the mature 70S translation initiation complex. In Corynebacterium glutamicum (strain R), this protein is Translation initiation factor IF-1.